The following is a 363-amino-acid chain: MTQLVPLAELPSGKKIYSVRGQRFEVDRQYDLVKVVGFGACGTVCSAVVNGSGERVAIKRLSRVFGDLREGKRILREMEIMTSLKHNNLIRLHHFMRPQSKETFEDIYLVMDLYDTDLNRIIRSRQKLTDEHLQYFMIQAFRGLHYLHSAKVMHRDLKPSNLLVNADCALAICDFGLARDDQVMSSSDLTQYVVTRWYRPPEVLGMGSNQYTSAVDVWSLGLIFAELMVGRALLPGTDYIGQLVMIVNLLGSPSIDDMEFLSSEAKAFILSQPHRPALSFRDLFPMATEEATDLLSKLLVFHPARRLTAKQVMEHPYFSKYRDAAEEADAPDPFVWNHSHIETKEQLREDLWRVVEAHSQLNE.

Residues 30-318 enclose the Protein kinase domain; the sequence is YDLVKVVGFG…AKQVMEHPYF (289 aa). Residues 36-44 and Lys-59 contribute to the ATP site; that span reads VGFGACGTV. The active-site Proton acceptor is Asp-156. Phosphoserine occurs at positions 186 and 187. A Phosphothreonine; by MKK5 modification is found at Thr-190. The TQY signature appears at 190–192; sequence TQY. A Phosphotyrosine; by MKK5 modification is found at Tyr-192.

Belongs to the protein kinase superfamily. CMGC Ser/Thr protein kinase family. MAP kinase subfamily. Mg(2+) serves as cofactor. In terms of processing, dually phosphorylated on Thr-190 and Tyr-192, which activates the enzyme.

It carries out the reaction L-seryl-[protein] + ATP = O-phospho-L-seryl-[protein] + ADP + H(+). The catalysed reaction is L-threonyl-[protein] + ATP = O-phospho-L-threonyl-[protein] + ADP + H(+). Functionally, essential for the two main proliferating life stages, the promastigotes and amastigotes, of the parasite. In Leishmania mexicana, this protein is Mitogen-activated protein kinase 4.